Consider the following 365-residue polypeptide: F-box protein At1g48060 (365 aa).

The segment at 1 to 20 (MKPQEEEEKNENMARKRSKS) is disordered. In terms of domain architecture, F-box spans 20-69 (SSSSLSIPLDIATDIFLRLPAKSVVRFSCVAKHWSSITTAPYFTNSFETR).

In Arabidopsis thaliana (Mouse-ear cress), this protein is F-box protein At1g48060.